The sequence spans 109 residues: Period circadian protein (109 aa).

Polar residues-rich tracts occupy residues 42–56 (QSYSTPANTGSNLSP) and 68–80 (SSRNCTSGSNLNM). The interval 42 to 109 (QSYSTPANTG…LVTLTESLLK (68 aa)) is disordered. Residues 81 to 97 (GSVTNTSNTGTGTSSGS) show a composition bias toward low complexity.

In terms of assembly, forms a heterodimer with timeless (TIM); the complex then translocates into the nucleus. In terms of processing, phosphorylated with a circadian rhythmicity, probably by the double-time protein (dbt). Phosphorylation could be implicated in the stability of per monomer and in the formation of heterodimer per-tim.

The protein localises to the nucleus. The protein resides in the cytoplasm. It is found in the perinuclear region. Functionally, essential for biological clock functions. Determines the period length of circadian and ultradian rhythms; an increase in PER dosage leads to shortened circadian rhythms and a decrease leads to lengthened circadian rhythms. Essential for the circadian rhythmicity of locomotor activity, eclosion behavior, and for the rhythmic component of the male courtship song that originates in the thoracic nervous system. The biological cycle depends on the rhythmic formation and nuclear localization of the TIM-PER complex. Light induces the degradation of TIM, which promotes elimination of PER. Nuclear activity of the heterodimer coordinatively regulates PER and TIM transcription through a negative feedback loop. Behaves as a negative element in circadian transcriptional loop. Does not appear to bind DNA, suggesting indirect transcriptional inhibition. The polypeptide is Period circadian protein (per) (Musca domestica (House fly)).